The sequence spans 455 residues: Probable galactarate/D-glucarate transporter GudP (455 aa).

12 helical membrane passes run 19–39 (WFIV…RATL), 59–79 (YVFS…GWLL), 87–107 (IIAL…AIGF), 108–128 (FSAG…GLSE), 153–173 (AFFN…MGWL), 177–197 (FGWH…AVIW), 253–273 (IGVY…LTWF), 289–309 (GFVA…GGIV), 320–340 (LTFA…SMIV), 348–368 (WLVV…ALGW), 386–406 (LFNT…GYIV), and 414–434 (GALV…LLLV).

Belongs to the major facilitator superfamily. Phthalate permease family.

Its subcellular location is the cell membrane. The catalysed reaction is galactarate(in) + H(+)(in) = galactarate(out) + H(+)(out). It catalyses the reaction D-glucarate(in) + H(+)(in) = D-glucarate(out) + H(+)(out). Probably involved in the uptake of galactarate and/or D-glucarate. The protein is Probable galactarate/D-glucarate transporter GudP of Bacillus subtilis (strain 168).